A 475-amino-acid polypeptide reads, in one-letter code: ATP synthase subunit beta (475 aa).

155–162 (GGAGVGKT) is a binding site for ATP.

The protein belongs to the ATPase alpha/beta chains family. In terms of assembly, F-type ATPases have 2 components, CF(1) - the catalytic core - and CF(0) - the membrane proton channel. CF(1) has five subunits: alpha(3), beta(3), gamma(1), delta(1), epsilon(1). CF(0) has three main subunits: a(1), b(2) and c(9-12). The alpha and beta chains form an alternating ring which encloses part of the gamma chain. CF(1) is attached to CF(0) by a central stalk formed by the gamma and epsilon chains, while a peripheral stalk is formed by the delta and b chains.

It is found in the cell inner membrane. It catalyses the reaction ATP + H2O + 4 H(+)(in) = ADP + phosphate + 5 H(+)(out). Functionally, produces ATP from ADP in the presence of a proton gradient across the membrane. The catalytic sites are hosted primarily by the beta subunits. This Rhizobium etli (strain ATCC 51251 / DSM 11541 / JCM 21823 / NBRC 15573 / CFN 42) protein is ATP synthase subunit beta.